The chain runs to 68 residues: MQVSVRDNNVEQALRALKKKLQREGVFREMKLKQHFEKPSVKRAREQAEAVRRARKLARKKAQREGAL.

Belongs to the bacterial ribosomal protein bS21 family.

This chain is Small ribosomal subunit protein bS21, found in Cereibacter sphaeroides (strain ATCC 17029 / ATH 2.4.9) (Rhodobacter sphaeroides).